Consider the following 248-residue polypeptide: Pyridoxine 5'-phosphate synthase (248 aa).

Asn-12 lines the 3-amino-2-oxopropyl phosphate pocket. 14-15 is a 1-deoxy-D-xylulose 5-phosphate binding site; sequence DH. Arg-23 provides a ligand contact to 3-amino-2-oxopropyl phosphate. His-48 acts as the Proton acceptor in catalysis. 1-deoxy-D-xylulose 5-phosphate-binding residues include Arg-50 and His-55. Glu-75 (proton acceptor) is an active-site residue. Thr-105 lines the 1-deoxy-D-xylulose 5-phosphate pocket. The Proton donor role is filled by His-196. 3-amino-2-oxopropyl phosphate is bound by residues Gly-197 and 218–219; that span reads GH.

Belongs to the PNP synthase family. As to quaternary structure, homooctamer; tetramer of dimers.

It is found in the cytoplasm. The catalysed reaction is 3-amino-2-oxopropyl phosphate + 1-deoxy-D-xylulose 5-phosphate = pyridoxine 5'-phosphate + phosphate + 2 H2O + H(+). It functions in the pathway cofactor biosynthesis; pyridoxine 5'-phosphate biosynthesis; pyridoxine 5'-phosphate from D-erythrose 4-phosphate: step 5/5. Catalyzes the complicated ring closure reaction between the two acyclic compounds 1-deoxy-D-xylulose-5-phosphate (DXP) and 3-amino-2-oxopropyl phosphate (1-amino-acetone-3-phosphate or AAP) to form pyridoxine 5'-phosphate (PNP) and inorganic phosphate. This chain is Pyridoxine 5'-phosphate synthase, found in Pseudomonas aeruginosa (strain LESB58).